A 389-amino-acid chain; its full sequence is 26S proteasome regulatory subunit 10B (389 aa).

Lys72 is modified (N6-acetyllysine). Residue 174–181 (GPPGTGKT) participates in ATP binding. The residue at position 206 (Lys206) is an N6-acetyllysine. Residue Ser244 is modified to Phosphoserine.

This sequence belongs to the AAA ATPase family. In terms of assembly, component of the 19S proteasome regulatory particle complex. The 26S proteasome consists of a 20S core particle (CP) and two 19S regulatory subunits (RP). The regulatory particle is made of a lid composed of 9 subunits, a base containing 6 ATPases including PSMC6 and few additional components. Interacts with PAAF1.

It is found in the cytoplasm. The protein localises to the nucleus. Component of the 26S proteasome, a multiprotein complex involved in the ATP-dependent degradation of ubiquitinated proteins. This complex plays a key role in the maintenance of protein homeostasis by removing misfolded or damaged proteins, which could impair cellular functions, and by removing proteins whose functions are no longer required. Therefore, the proteasome participates in numerous cellular processes, including cell cycle progression, apoptosis, or DNA damage repair. PSMC6 belongs to the heterohexameric ring of AAA (ATPases associated with diverse cellular activities) proteins that unfolds ubiquitinated target proteins that are concurrently translocated into a proteolytic chamber and degraded into peptides. The polypeptide is 26S proteasome regulatory subunit 10B (PSMC6) (Bos taurus (Bovine)).